Here is a 148-residue protein sequence, read N- to C-terminus: Large ribosomal subunit protein uL15 (148 aa).

Positions 1 to 51 (MNLSSLKPAEGAVKSRKRIGRGPGSGLGGTSTRGHKGAKSRSGYSKKIGFE) are disordered. Residues 21–31 (RGPGSGLGGTS) are compositionally biased toward gly residues.

The protein belongs to the universal ribosomal protein uL15 family. In terms of assembly, part of the 50S ribosomal subunit.

Binds to the 23S rRNA. The polypeptide is Large ribosomal subunit protein uL15 (Porphyromonas gingivalis (strain ATCC 33277 / DSM 20709 / CIP 103683 / JCM 12257 / NCTC 11834 / 2561)).